A 232-amino-acid polypeptide reads, in one-letter code: 7-cyano-7-deazaguanine synthase (232 aa).

An ATP-binding site is contributed by 7-17; it reads CSGGLDSVSLA. Zn(2+) contacts are provided by Cys185, Cys193, Cys196, and Cys199.

This sequence belongs to the QueC family. The cofactor is Zn(2+).

The enzyme catalyses 7-carboxy-7-deazaguanine + NH4(+) + ATP = 7-cyano-7-deazaguanine + ADP + phosphate + H2O + H(+). The protein operates within purine metabolism; 7-cyano-7-deazaguanine biosynthesis. Functionally, catalyzes the ATP-dependent conversion of 7-carboxy-7-deazaguanine (CDG) to 7-cyano-7-deazaguanine (preQ(0)). This is 7-cyano-7-deazaguanine synthase from Brucella anthropi (strain ATCC 49188 / DSM 6882 / CCUG 24695 / JCM 21032 / LMG 3331 / NBRC 15819 / NCTC 12168 / Alc 37) (Ochrobactrum anthropi).